Reading from the N-terminus, the 191-residue chain is Early nodulin-like protein 8 (191 aa).

The N-terminal stretch at 1–22 (MGVMSLSKTMVVVVLQVMILLG) is a signal peptide. In terms of domain architecture, Phytocyanin spans 31-133 (TLYKVGDLDA…YQKLLVSVGT (103 aa)). A disulfide bond links Cys-87 and Cys-121. N-linked (GlcNAc...) asparagine glycans are attached at residues Asn-104 and Asn-108. Ser-165 is lipidated: GPI-anchor amidated serine. The propeptide at 166–191 (SASSSLISAFSTVAASLACAVVGAIM) is removed in mature form.

Belongs to the early nodulin-like (ENODL) family. In terms of tissue distribution, mostly expressed in seedlings and roots, and, to a lower extent, in leaves, flowers, stems and seeds.

It localises to the cell membrane. In terms of biological role, may act as a carbohydrate transporter. The sequence is that of Early nodulin-like protein 8 from Arabidopsis thaliana (Mouse-ear cress).